The following is a 581-amino-acid chain: Urease subunit alpha (581 aa).

The Urease domain occupies 134 to 581 (GGFDSHIHFI…LPMTQRYFLF (448 aa)). 3 residues coordinate Ni(2+): histidine 139, histidine 141, and lysine 222. Lysine 222 bears the N6-carboxylysine mark. Histidine 224 contributes to the substrate binding site. Ni(2+)-binding residues include histidine 251 and histidine 277. Residue histidine 325 is the Proton donor of the active site. Aspartate 365 provides a ligand contact to Ni(2+).

It belongs to the metallo-dependent hydrolases superfamily. Urease alpha subunit family. Heterotrimer of UreA (gamma), UreB (beta) and UreC (alpha) subunits. Three heterotrimers associate to form the active enzyme. Requires Ni cation as cofactor. Post-translationally, carboxylation allows a single lysine to coordinate two nickel ions.

It is found in the cytoplasm. The catalysed reaction is urea + 2 H2O + H(+) = hydrogencarbonate + 2 NH4(+). It functions in the pathway nitrogen metabolism; urea degradation; CO(2) and NH(3) from urea (urease route): step 1/1. The chain is Urease subunit alpha from Albidiferax ferrireducens (strain ATCC BAA-621 / DSM 15236 / T118) (Rhodoferax ferrireducens).